The primary structure comprises 108 residues: ATP-dependent Clp protease adapter protein ClpS (108 aa).

The protein belongs to the ClpS family. Binds to the N-terminal domain of the chaperone ClpA.

Involved in the modulation of the specificity of the ClpAP-mediated ATP-dependent protein degradation. This chain is ATP-dependent Clp protease adapter protein ClpS, found in Cupriavidus metallidurans (strain ATCC 43123 / DSM 2839 / NBRC 102507 / CH34) (Ralstonia metallidurans).